Here is a 423-residue protein sequence, read N- to C-terminus: Gamma-glutamyl phosphate reductase (423 aa).

This sequence belongs to the gamma-glutamyl phosphate reductase family.

The protein resides in the cytoplasm. The catalysed reaction is L-glutamate 5-semialdehyde + phosphate + NADP(+) = L-glutamyl 5-phosphate + NADPH + H(+). The protein operates within amino-acid biosynthesis; L-proline biosynthesis; L-glutamate 5-semialdehyde from L-glutamate: step 2/2. In terms of biological role, catalyzes the NADPH-dependent reduction of L-glutamate 5-phosphate into L-glutamate 5-semialdehyde and phosphate. The product spontaneously undergoes cyclization to form 1-pyrroline-5-carboxylate. The sequence is that of Gamma-glutamyl phosphate reductase from Paraburkholderia xenovorans (strain LB400).